Here is a 374-residue protein sequence, read N- to C-terminus: Protein RecA (374 aa).

66-73 (GPESSGKT) lines the ATP pocket. The tract at residues 327–374 (LGVGVHPEESATEPGADAASAAPADAAPAVPAPTTAKATKSKAAAAKS) is disordered. A compositionally biased stretch (low complexity) spans 338–374 (TEPGADAASAAPADAAPAVPAPTTAKATKSKAAAAKS).

Belongs to the RecA family.

It localises to the cytoplasm. Can catalyze the hydrolysis of ATP in the presence of single-stranded DNA, the ATP-dependent uptake of single-stranded DNA by duplex DNA, and the ATP-dependent hybridization of homologous single-stranded DNAs. It interacts with LexA causing its activation and leading to its autocatalytic cleavage. The sequence is that of Protein RecA from Streptomyces lividans.